Reading from the N-terminus, the 96-residue chain is Co-chaperonin GroES (96 aa).

The protein belongs to the GroES chaperonin family. As to quaternary structure, heptamer of 7 subunits arranged in a ring. Interacts with the chaperonin GroEL.

The protein localises to the cytoplasm. Together with the chaperonin GroEL, plays an essential role in assisting protein folding. The GroEL-GroES system forms a nano-cage that allows encapsulation of the non-native substrate proteins and provides a physical environment optimized to promote and accelerate protein folding. GroES binds to the apical surface of the GroEL ring, thereby capping the opening of the GroEL channel. In Solidesulfovibrio magneticus (strain ATCC 700980 / DSM 13731 / RS-1) (Desulfovibrio magneticus), this protein is Co-chaperonin GroES.